Reading from the N-terminus, the 425-residue chain is Histone-binding protein RBBP7 (425 aa).

WD repeat units lie at residues 47–122 (QWLP…KINH), 128–173 (RARY…LRLR), 181–217 (GLSWNSNLSGHLLSASDDHTVCLWDISAGPKEGKVVD), 228–269 (VVED…HSVD), 275–312 (VNCLSFNPYSEFILATGSADKTVALWDLRNLKLKLHSF), 318–369 (EIFQ…LFIH), and 376–403 (ISDFSWNPNEPWVICSVSEDNIMQIWQM).

This sequence belongs to the WD repeat RBAP46/RBAP48/MSI1 family. As to quaternary structure, binds directly to helix 1 of the histone fold of histone H4, a region that is not accessible when H4 is in chromatin.

It localises to the nucleus. Core histone-binding subunit that may target chromatin remodeling factors, histone acetyltransferases and histone deacetylases to their histone substrates in a manner that is regulated by nucleosomal DNA. Component of several complexes which regulate chromatin metabolism. The chain is Histone-binding protein RBBP7 (rbbp7) from Xenopus tropicalis (Western clawed frog).